Reading from the N-terminus, the 536-residue chain is CTP synthase (536 aa).

Residues methionine 1 to isoleucine 266 form an amidoligase domain region. Serine 14 is a binding site for CTP. Serine 14 contacts UTP. Residues serine 15 to leucine 20 and aspartate 72 each bind ATP. Mg(2+) contacts are provided by aspartate 72 and glutamate 140. Residues aspartate 147 to glutamate 149, lysine 187 to glutamine 192, and lysine 223 contribute to the CTP site. Residues lysine 187–glutamine 192 and lysine 223 contribute to the UTP site. The region spanning arginine 292–lysine 534 is the Glutamine amidotransferase type-1 domain. Glycine 354 contacts L-glutamine. The Nucleophile; for glutamine hydrolysis role is filled by cysteine 381. L-glutamine contacts are provided by residues leucine 382–glutamine 385, glutamate 405, and arginine 462. Active-site residues include histidine 507 and glutamate 509.

Belongs to the CTP synthase family. In terms of assembly, homotetramer.

The enzyme catalyses UTP + L-glutamine + ATP + H2O = CTP + L-glutamate + ADP + phosphate + 2 H(+). The catalysed reaction is L-glutamine + H2O = L-glutamate + NH4(+). It catalyses the reaction UTP + NH4(+) + ATP = CTP + ADP + phosphate + 2 H(+). The protein operates within pyrimidine metabolism; CTP biosynthesis via de novo pathway; CTP from UDP: step 2/2. Its activity is regulated as follows. Allosterically activated by GTP, when glutamine is the substrate; GTP has no effect on the reaction when ammonia is the substrate. The allosteric effector GTP functions by stabilizing the protein conformation that binds the tetrahedral intermediate(s) formed during glutamine hydrolysis. Inhibited by the product CTP, via allosteric rather than competitive inhibition. Its function is as follows. Catalyzes the ATP-dependent amination of UTP to CTP with either L-glutamine or ammonia as the source of nitrogen. Regulates intracellular CTP levels through interactions with the four ribonucleotide triphosphates. The chain is CTP synthase from Geobacter sulfurreducens (strain ATCC 51573 / DSM 12127 / PCA).